A 226-amino-acid polypeptide reads, in one-letter code: Large ribosomal subunit protein uL3 (226 aa).

Positions 136–162 (NFGSQRASHGNSRSHNVPGSISMAQDP) are disordered. Polar residues predominate over residues 137–158 (FGSQRASHGNSRSHNVPGSISM). Q160 is modified (N5-methylglutamine).

The protein belongs to the universal ribosomal protein uL3 family. Part of the 50S ribosomal subunit. Forms a cluster with proteins L14 and L19. Post-translationally, methylated by PrmB.

One of the primary rRNA binding proteins, it binds directly near the 3'-end of the 23S rRNA, where it nucleates assembly of the 50S subunit. This Methylibium petroleiphilum (strain ATCC BAA-1232 / LMG 22953 / PM1) protein is Large ribosomal subunit protein uL3.